The chain runs to 335 residues: 1D-myo-inositol 2-acetamido-2-deoxy-alpha-D-glucopyranoside deacetylase (335 aa).

Zn(2+)-binding residues include histidine 19, aspartate 22, and histidine 158.

The protein belongs to the MshB deacetylase family. Zn(2+) serves as cofactor.

The enzyme catalyses 1D-myo-inositol 2-acetamido-2-deoxy-alpha-D-glucopyranoside + H2O = 1D-myo-inositol 2-amino-2-deoxy-alpha-D-glucopyranoside + acetate. Functionally, catalyzes the deacetylation of 1D-myo-inositol 2-acetamido-2-deoxy-alpha-D-glucopyranoside (GlcNAc-Ins) in the mycothiol biosynthesis pathway. The sequence is that of 1D-myo-inositol 2-acetamido-2-deoxy-alpha-D-glucopyranoside deacetylase from Corynebacterium urealyticum (strain ATCC 43042 / DSM 7109).